The chain runs to 220 residues: WAP four-disulfide core domain protein 1 (220 aa).

An N-terminal signal peptide occupies residues 1 to 31; it reads MPLTGVGPGSCRRQIIRALCLLLLLLHAGSA. The tract at residues 46 to 70 is disordered; that stretch reads KSRAEEAGAPGGPRQPRADRCPPPP. The region spanning 59-108 is the WAP domain; it reads RQPRADRCPPPPRTLPPGACQAARCQADSECPRHRRCCYNGCAYACLEAV. Cystine bridges form between Cys66–Cys96, Cys78–Cys100, Cys83–Cys95, and Cys89–Cys104. The disordered stretch occupies residues 199–220; the sequence is EYPEGDSKNVAEPGRGQQKHFQ.

The protein resides in the secreted. In terms of biological role, has growth inhibitory activity. This Homo sapiens (Human) protein is WAP four-disulfide core domain protein 1 (WFDC1).